A 289-amino-acid polypeptide reads, in one-letter code: Ribosomal RNA small subunit methyltransferase I (289 aa).

It belongs to the methyltransferase superfamily. RsmI family.

It localises to the cytoplasm. It carries out the reaction cytidine(1402) in 16S rRNA + S-adenosyl-L-methionine = 2'-O-methylcytidine(1402) in 16S rRNA + S-adenosyl-L-homocysteine + H(+). Functionally, catalyzes the 2'-O-methylation of the ribose of cytidine 1402 (C1402) in 16S rRNA. The polypeptide is Ribosomal RNA small subunit methyltransferase I (Halalkalibacterium halodurans (strain ATCC BAA-125 / DSM 18197 / FERM 7344 / JCM 9153 / C-125) (Bacillus halodurans)).